Reading from the N-terminus, the 126-residue chain is Glycine cleavage system H protein (126 aa).

Residues 21–103 (TVTIGISEHA…YDGGWIVKVK (83 aa)) enclose the Lipoyl-binding domain. K62 bears the N6-lipoyllysine mark.

This sequence belongs to the GcvH family. The glycine cleavage system is composed of four proteins: P, T, L and H. (R)-lipoate serves as cofactor.

In terms of biological role, the glycine cleavage system catalyzes the degradation of glycine. The H protein shuttles the methylamine group of glycine from the P protein to the T protein. The protein is Glycine cleavage system H protein of Vibrio cholerae serotype O1 (strain ATCC 39541 / Classical Ogawa 395 / O395).